A 106-amino-acid chain; its full sequence is RSTFPTRECPELLCQYSCNSQRFAELLRTEFKHRYEGKITNYLHKTLAHVPEIIERDGSIGAWASEGNESGNKLFRRFRKMNARQSKSYELEGILKHHWLYTSKYL.

Glu-69 serves as a coordination point for a divalent metal cation.

The protein belongs to the RAG1 family. Homodimer. Component of the RAG complex composed of core components rag1 and rag2. It depends on Mg(2+) as a cofactor. Requires Mn(2+) as cofactor.

Its subcellular location is the nucleus. It catalyses the reaction S-ubiquitinyl-[E2 ubiquitin-conjugating enzyme]-L-cysteine + [acceptor protein]-L-lysine = [E2 ubiquitin-conjugating enzyme]-L-cysteine + N(6)-ubiquitinyl-[acceptor protein]-L-lysine.. Its function is as follows. Catalytic component of the RAG complex, a multiprotein complex that mediates the DNA cleavage phase during V(D)J recombination. V(D)J recombination assembles a diverse repertoire of immunoglobulin and T-cell receptor genes in developing B and T lymphocytes through rearrangement of different V (variable), in some cases D (diversity), and J (joining) gene segments. In the RAG complex, RAG1 mediates the DNA-binding to the conserved recombination signal sequences (RSS) and catalyzes the DNA cleavage activities by introducing a double-strand break between the RSS and the adjacent coding segment. RAG2 is not a catalytic component but is required for all known catalytic activities. DNA cleavage occurs in 2 steps: a first nick is introduced in the top strand immediately upstream of the heptamer, generating a 3'-hydroxyl group that can attack the phosphodiester bond on the opposite strand in a direct transesterification reaction, thereby creating 4 DNA ends: 2 hairpin coding ends and 2 blunt, 5'-phosphorylated ends. In addition to its endonuclease activity, RAG1 also acts as an E3 ubiquitin-protein ligase that mediates monoubiquitination of histone H3. Histone H3 monoubiquitination is required for the joining step of V(D)J recombination. The chain is V(D)J recombination-activating protein 1 (rag1) from Ginglymostoma cirratum (Nurse shark).